The chain runs to 224 residues: MRLLVVEDEKSIAEAIQALLADKGYSVDLAFDGDDGLEYILTGLYDLVLLDIMLPKRSGLSVLKRVREAGLETPIIFLTAKSQTYDKVNGLDLGADDYITKPFEADELLARIRLRTRQSSLIRANQLRLGNIRLNTDSHELESKESSVKLSNKEFLLMEVFMRNAKQIIPKNQLISKVWGPSDNSEYNQLEVFISFLRKKLRFLKADIEIITTKGFGYSLEERT.

The region spanning 2–116 is the Response regulatory domain; it reads RLLVVEDEKS…ELLARIRLRT (115 aa). D51 is subject to 4-aspartylphosphate. The ompR/PhoB-type DNA-binding region spans 124-222; the sequence is ANQLRLGNIR…TKGFGYSLEE (99 aa).

Phosphorylated by DltS.

The protein localises to the cytoplasm. In terms of biological role, member of the two-component regulatory system DltS/DltR. Regulates the expression of the dlt operon. This is Transcriptional regulatory protein DltR (dltR) from Streptococcus agalactiae serotype III (strain NEM316).